We begin with the raw amino-acid sequence, 358 residues long: Anhydro-N-acetylmuramic acid kinase (358 aa).

9 to 16 contributes to the ATP binding site; the sequence is GTSLDGVD.

Belongs to the anhydro-N-acetylmuramic acid kinase family.

The enzyme catalyses 1,6-anhydro-N-acetyl-beta-muramate + ATP + H2O = N-acetyl-D-muramate 6-phosphate + ADP + H(+). The protein operates within amino-sugar metabolism; 1,6-anhydro-N-acetylmuramate degradation. Its pathway is cell wall biogenesis; peptidoglycan recycling. In terms of biological role, catalyzes the specific phosphorylation of 1,6-anhydro-N-acetylmuramic acid (anhMurNAc) with the simultaneous cleavage of the 1,6-anhydro ring, generating MurNAc-6-P. Is required for the utilization of anhMurNAc either imported from the medium or derived from its own cell wall murein, and thus plays a role in cell wall recycling. The protein is Anhydro-N-acetylmuramic acid kinase of Acidiphilium cryptum (strain JF-5).